Consider the following 197-residue polypeptide: Probable deoxycytidylate deaminase (197 aa).

The CMP/dCMP-type deaminase domain occupies 49–183; that stretch reads KKHQRFLRIA…KMLDHARLPY (135 aa). His-117 contacts Zn(2+). Residue Glu-119 is the Proton donor of the active site. Zn(2+) is bound by residues Cys-143 and Cys-146.

The protein belongs to the cytidine and deoxycytidylate deaminase family. Zn(2+) serves as cofactor.

The enzyme catalyses dCMP + H2O + H(+) = dUMP + NH4(+). Supplies the nucleotide substrate for thymidylate synthetase. This Caenorhabditis elegans protein is Probable deoxycytidylate deaminase.